Here is a 347-residue protein sequence, read N- to C-terminus: MAPQAPDREKALELALAQIEKSHGKGSVMRLGDEVRAPISVIPTGSIALDVALGIGGLPRGRVIEIYGPESSGKTTVALHAVANAQAAGGIAAFIDAEHALDPDYAKKLGVDTDSLLVSQPDTGEQALEIADMLIRSGALDILVIDSVAALVPRAEIEGEMGDSHVGLQARLMSQALRKITGALSNSGTTAIFINQLREKIGVMFGSPETTTGGKALKFYASVRMDVRRIETLKDGTDAVGNRTRVKIVKNKVSPPFKQAEFDILYGKGISKEGSLIDMGVEHGFIRKSGSWFTYEGEQLGQGKENARKFLLENGDVANEIEKKIKEKLNIGAVVTADDVLPAPVDF.

An ATP-binding site is contributed by 68–75 (GPESSGKT).

This sequence belongs to the RecA family.

It localises to the cytoplasm. Can catalyze the hydrolysis of ATP in the presence of single-stranded DNA, the ATP-dependent uptake of single-stranded DNA by duplex DNA, and the ATP-dependent hybridization of homologous single-stranded DNAs. It interacts with LexA causing its activation and leading to its autocatalytic cleavage. The sequence is that of Protein RecA from Mycobacterium sp. (strain JLS).